We begin with the raw amino-acid sequence, 112 residues long: Putative pterin-4-alpha-carbinolamine dehydratase (112 aa).

It belongs to the pterin-4-alpha-carbinolamine dehydratase family.

The enzyme catalyses (4aS,6R)-4a-hydroxy-L-erythro-5,6,7,8-tetrahydrobiopterin = (6R)-L-erythro-6,7-dihydrobiopterin + H2O. The protein is Putative pterin-4-alpha-carbinolamine dehydratase of Shewanella amazonensis (strain ATCC BAA-1098 / SB2B).